The primary structure comprises 468 residues: 3-isopropylmalate dehydratase large subunit 2 (468 aa).

[4Fe-4S] cluster-binding residues include cysteine 349, cysteine 409, and cysteine 412.

It belongs to the aconitase/IPM isomerase family. LeuC type 1 subfamily. As to quaternary structure, heterodimer of LeuC and LeuD. It depends on [4Fe-4S] cluster as a cofactor.

It catalyses the reaction (2R,3S)-3-isopropylmalate = (2S)-2-isopropylmalate. The protein operates within amino-acid biosynthesis; L-leucine biosynthesis; L-leucine from 3-methyl-2-oxobutanoate: step 2/4. Its function is as follows. Catalyzes the isomerization between 2-isopropylmalate and 3-isopropylmalate, via the formation of 2-isopropylmaleate. The polypeptide is 3-isopropylmalate dehydratase large subunit 2 (Bradyrhizobium diazoefficiens (strain JCM 10833 / BCRC 13528 / IAM 13628 / NBRC 14792 / USDA 110)).